The following is a 149-amino-acid chain: Nucleoside diphosphate kinase (149 aa).

Residues Lys-9, Phe-57, Arg-85, Thr-91, Arg-102, and Asn-112 each contribute to the ATP site. The Pros-phosphohistidine intermediate role is filled by His-115.

The protein belongs to the NDK family. Mg(2+) serves as cofactor.

The protein localises to the cytoplasm. The enzyme catalyses a 2'-deoxyribonucleoside 5'-diphosphate + ATP = a 2'-deoxyribonucleoside 5'-triphosphate + ADP. The catalysed reaction is a ribonucleoside 5'-diphosphate + ATP = a ribonucleoside 5'-triphosphate + ADP. In terms of biological role, major role in the synthesis of nucleoside triphosphates other than ATP. The ATP gamma phosphate is transferred to the NDP beta phosphate via a ping-pong mechanism, using a phosphorylated active-site intermediate. The polypeptide is Nucleoside diphosphate kinase (Methanosarcina acetivorans (strain ATCC 35395 / DSM 2834 / JCM 12185 / C2A)).